The following is a 561-amino-acid chain: MPESKYRQQTIRAPRGTVLTAKSWLTEAPLRMLMNNLDPDVAENPHELVVYGGIGRAARNWECYDAIVDALTRLEADETLLIQSGKPVGVFKTHDNAPRVLIANSNLVPHWATWEHFNELDAKGLAMYGQMTAGSWIYIGSQGIVQGTYETFVEAGRQHYNGTLAGRWALTAGLGGMGGAQPLAATLAGACSLTIECQQSRIDFRLRTRYVDEQAATLDDALARITRYTREGKAVSVALCANAADILPELVNRGVRPDLVTDQTSAHDPLHGYLPSGWCWEEYQKNAQSDPRGTMQAAKRSMAAHVRAMLAFSKMGVPTFDYGNNIRQMAKEMGVENAFDFPGFVPAYIRPLFCRGIGPFRWVALSGDPQDIYKTDAKVKEIVAEDKHLHHWLDMARERIHFQGLPARICWVGLEWRQKLGLAFNEMVRCGEVSAPIVIGRDHLDSGSVASPNRETEAMRDGSDAVSDWPLLNALLNTASGATWVSLHHGGGVGMGFSQHAGMVIVCDGTDEAAARIRRVLHNDPATGVMRHADAGYDLAVECAVEQGLNLPMVAATQGKG.

Residues 52 to 53, Gln-130, 176 to 178, Glu-196, Arg-201, 242 to 243, 263 to 267, 273 to 274, and Tyr-322 contribute to the NAD(+) site; these read GG, GMG, NA, QTSAH, and YL. Cys-410 is a catalytic residue. Gly-492 is an NAD(+) binding site.

The protein belongs to the urocanase family. Requires NAD(+) as cofactor.

The protein localises to the cytoplasm. It carries out the reaction 4-imidazolone-5-propanoate = trans-urocanate + H2O. It functions in the pathway amino-acid degradation; L-histidine degradation into L-glutamate; N-formimidoyl-L-glutamate from L-histidine: step 2/3. Catalyzes the conversion of urocanate to 4-imidazolone-5-propionate. The chain is Urocanate hydratase from Salmonella typhi.